Consider the following 25-residue polypeptide: Ocellatin-K1 (25 aa).

Isoleucine amide is present on Ile-25.

Expressed by the skin glands.

The protein resides in the secreted. Has hemolytic and antibacterial activity. This Leptodactylus knudseni (Knudsen's thin-toed frog) protein is Ocellatin-K1.